The chain runs to 334 residues: N-acetylmuramate/N-acetylglucosamine kinase (334 aa).

It belongs to the kinase AmgK family.

The enzyme catalyses N-acetyl-D-muramate + ATP = N-acetyl-alpha-D-muramate 1-phosphate + ADP + H(+). The catalysed reaction is N-acetyl-D-glucosamine + ATP = N-acetyl-alpha-D-glucosamine 1-phosphate + ADP + H(+). The protein operates within cell wall biogenesis; peptidoglycan recycling. In terms of biological role, sugar kinase that catalyzes the ATP-dependent phosphorylation of N-acetylmuramate (MurNAc) and N-acetylglucosamine (GlcNAc) at its C1 hydroxyl group, leading to MurNAc alpha-1P and GlcNAc alpha-1P, respectively. Is likely involved in peptidoglycan recycling as part of a cell wall recycling pathway that bypasses de novo biosynthesis of the peptidoglycan precursor UDP-MurNAc. Is able to complement the fosfomycin sensitivity phenotype of a P.putida mutant lacking amgK. This Neisseria meningitidis serogroup B (strain ATCC BAA-335 / MC58) protein is N-acetylmuramate/N-acetylglucosamine kinase.